Reading from the N-terminus, the 383-residue chain is Teichoic acid glycerol-phosphate primase (383 aa).

This sequence belongs to the CDP-glycerol glycerophosphotransferase family.

It localises to the cell membrane. The enzyme catalyses N-acetyl-beta-D-mannosaminyl-(1-&gt;4)-N-acetyl-alpha-D-glucosaminyl di-trans,octa-cis-undecaprenyl diphosphate + CDP-glycerol = 4-O-[(2R)-glycerylphospho]-N-acetyl-beta-D-mannosaminyl-(1-&gt;4)-N-acetyl-alpha-D-glucosaminyl di-trans,octa-cis-undecaprenyl diphosphate + CMP + H(+). The protein operates within cell wall biogenesis; poly(ribitol phosphate) teichoic acid biosynthesis. Functionally, catalyzes the addition of a single glycerol phosphate residue to the prenoldiphosphate-linked disaccharide. In Bacillus spizizenii (strain ATCC 23059 / NRRL B-14472 / W23) (Bacillus subtilis subsp. spizizenii), this protein is Teichoic acid glycerol-phosphate primase (tarB).